The primary structure comprises 122 residues: Conotoxin flf14.2 (122 aa).

The signal sequence occupies residues 1–22 (MGFRVLVLIVMVTTSALPFTFS). A propeptide spanning residues 23–96 (EESGRSPFRP…AESPVGQKRW (74 aa)) is cleaved from the precursor. Positions 53-91 (RADGQPSDMRQPEMRRPEMRRPEVRRPEVRQPEFAESPV) are disordered. Residues 62–85 (RQPEMRRPEMRRPEVRRPEVRQPE) show a composition bias toward basic and acidic residues. 2 disulfides stabilise this stretch: Cys-101–Cys-121 and Cys-105–Cys-117.

The protein belongs to the conotoxin R superfamily. As to expression, expressed by the venom duct.

Its subcellular location is the secreted. The chain is Conotoxin flf14.2 from Conus anabathrum floridanus (Florida cone).